Reading from the N-terminus, the 342-residue chain is AA9 family lytic polysaccharide monooxygenase H (342 aa).

An N-terminal signal peptide occupies residues 1–19 (MSKASALLAGLTGAALVAA). His-20 and His-106 together coordinate Cu(2+). 2 disulfides stabilise this stretch: Cys-75–Cys-195 and Cys-117–Cys-121. Residues His-181 and Gln-190 each coordinate O2. A Cu(2+)-binding site is contributed by Tyr-192. The tract at residues 263 to 308 (ATVPGGGGANPTATTTAATSAAPSTTLRTTTTSAAQTTAPPSGDVQ) is disordered. The span at 272–305 (NPTATTTAATSAAPSTTLRTTTTSAAQTTAPPSG) shows a compositional bias: low complexity. The region spanning 306–342 (DVQTKYGQCGGNGWTGPTVCAPGSSCSVLNEWYSQCL) is the CBM1 domain.

Belongs to the polysaccharide monooxygenase AA9 family. Cu(2+) serves as cofactor.

The protein localises to the secreted. It catalyses the reaction [(1-&gt;4)-beta-D-glucosyl]n+m + reduced acceptor + O2 = 4-dehydro-beta-D-glucosyl-[(1-&gt;4)-beta-D-glucosyl]n-1 + [(1-&gt;4)-beta-D-glucosyl]m + acceptor + H2O.. Its activity is regulated as follows. The presence of lignin presents a significant source of antioxidants, which probably increase the activity by trapping liberated oxidized fragments. Functionally, lytic polysaccharide monooxygenase (LPMO) that depolymerizes crystalline and amorphous polysaccharides via the oxidation of scissile alpha- or beta-(1-4)-glycosidic bonds, yielding C1 or C4 oxidation products. Catalysis by LPMOs requires the reduction of the active-site copper from Cu(II) to Cu(I) by a reducing agent and H(2)O(2) or O(2) as a cosubstrate. Hydrolyzes weakly barley beta-glucan, carboxymethyl cellulose, lichenan, wheat arabinoxylan and birchwood xylan. Stimulates the hydrolysis of lignocellulosic substrates (such as hydrothermal pretreated wheat straw or steam-pretreated spruce), when combined with other cellulolytic enzymes. The chain is AA9 family lytic polysaccharide monooxygenase H from Thermothelomyces thermophilus (strain ATCC 42464 / BCRC 31852 / DSM 1799) (Sporotrichum thermophile).